A 759-amino-acid chain; its full sequence is Polyribonucleotide nucleotidyltransferase (759 aa).

The Mg(2+) site is built by D522 and D528. A KH domain is found at 588-647; it reads PRITTIKVPVDKIGEVIGPKGKMINSITEETGASISIEDDGTVFVGASNGEAAQAAIDKI. The region spanning 659-728 is the S1 motif domain; that stretch reads GERFLGTVVK…NRGKISLVLV (70 aa). The disordered stretch occupies residues 734 to 759; it reads AEASDNGSATPSDKAPATADATTAGN. Low complexity predominate over residues 741-759; sequence SATPSDKAPATADATTAGN.

Belongs to the polyribonucleotide nucleotidyltransferase family. Mg(2+) serves as cofactor.

Its subcellular location is the cytoplasm. The catalysed reaction is RNA(n+1) + phosphate = RNA(n) + a ribonucleoside 5'-diphosphate. Functionally, involved in mRNA degradation. Catalyzes the phosphorolysis of single-stranded polyribonucleotides processively in the 3'- to 5'-direction. This is Polyribonucleotide nucleotidyltransferase from Mycobacterium sp. (strain JLS).